The following is a 217-amino-acid chain: Large ribosomal subunit protein uL3 (217 aa).

Residues 134–146 (GRATHGNSRSHNV) are compositionally biased toward polar residues. A disordered region spans residues 134–154 (GRATHGNSRSHNVPGSIGMAQ). Residue Gln154 is modified to N5-methylglutamine.

The protein belongs to the universal ribosomal protein uL3 family. As to quaternary structure, part of the 50S ribosomal subunit. Forms a cluster with proteins L14 and L19. Methylated by PrmB.

One of the primary rRNA binding proteins, it binds directly near the 3'-end of the 23S rRNA, where it nucleates assembly of the 50S subunit. This is Large ribosomal subunit protein uL3 from Burkholderia lata (strain ATCC 17760 / DSM 23089 / LMG 22485 / NCIMB 9086 / R18194 / 383).